The sequence spans 460 residues: Exodeoxyribonuclease 7 large subunit (460 aa).

Belongs to the XseA family. As to quaternary structure, heterooligomer composed of large and small subunits.

It is found in the cytoplasm. It carries out the reaction Exonucleolytic cleavage in either 5'- to 3'- or 3'- to 5'-direction to yield nucleoside 5'-phosphates.. In terms of biological role, bidirectionally degrades single-stranded DNA into large acid-insoluble oligonucleotides, which are then degraded further into small acid-soluble oligonucleotides. This Edwardsiella ictaluri (strain 93-146) protein is Exodeoxyribonuclease 7 large subunit.